Consider the following 103-residue polypeptide: MYAVVKTGGKQYKVAAGEKLKVEQIPADVGAEITLDQVLAVGAGDQLKVGAPLVSGAAVKATVISHGRHDKVHIFKMRRRKHYQKRQGHRQNYTELRIDSIVA.

It belongs to the bacterial ribosomal protein bL21 family. In terms of assembly, part of the 50S ribosomal subunit. Contacts protein L20.

Functionally, this protein binds to 23S rRNA in the presence of protein L20. The protein is Large ribosomal subunit protein bL21 of Ralstonia pickettii (strain 12J).